The chain runs to 349 residues: Short-wave-sensitive opsin 1 (349 aa).

Residues 1–34 (MSKMSEEEEFLLFKNISLVGPWDGPQYHLAPVWA) lie on the Extracellular side of the membrane. Residue N15 is glycosylated (N-linked (GlcNAc...) asparagine). Residues 35-59 (FHLQAVFMGFVFFVGTPLNATVLVA) form a helical membrane-spanning segment. The Cytoplasmic segment spans residues 60-71 (TLRYRKLRQPLN). Residues 72–97 (YILVNVSLGGFIYCIFSVFIVFITSC) traverse the membrane as a helical segment. The Extracellular segment spans residues 98 to 111 (YGYFVFGRHVCALE). An intrachain disulfide couples C108 to C185. Residues 112-131 (AFLGCTAGLVTGWSLAFLAF) form a helical membrane-spanning segment. Residues 132-150 (ERYIIICKPFGNFRFSSKH) lie on the Cytoplasmic side of the membrane. A helical transmembrane segment spans residues 151–174 (ALMVVVATWTIGIGVSIPPFFGWS). At 175–200 (RFVPEGLQCSCGPDWYTVGTKYYSEY) the chain is on the extracellular side. A helical membrane pass occupies residues 201–228 (YTWFLFIFCYIVPLSLICFSYSQLLGAL). Residues 229 to 250 (RAVAAQQQESASTQKAEREVSH) are Cytoplasmic-facing. Residues 251 to 274 (MVVVMVGSFCLCYTPYAALAMYIV) traverse the membrane as a helical segment. Over 275–282 (NNRNHGVD) the chain is Extracellular. The helical transmembrane segment at 283–307 (LRLVTIPAFFSKSACVYNPIIYCFM) threads the bilayer. N6-(retinylidene)lysine is present on K294. Topologically, residues 308 to 349 (NKQFRACIMEMVCGKPMTDESELSSSQKTEVSTVSSSQVGPN) are cytoplasmic. Residues 327–349 (ESELSSSQKTEVSTVSSSQVGPN) form a disordered region. Positions 330–349 (LSSSQKTEVSTVSSSQVGPN) are enriched in polar residues.

The protein belongs to the G-protein coupled receptor 1 family. Opsin subfamily. Post-translationally, phosphorylated on some or all of the serine and threonine residues present in the C-terminal region.

It localises to the cell membrane. Its subcellular location is the photoreceptor inner segment. The protein localises to the cell projection. The protein resides in the cilium. It is found in the photoreceptor outer segment. It localises to the cytoplasm. Its subcellular location is the perinuclear region. In terms of biological role, visual pigments are the light-absorbing molecules that mediate vision. They consist of an apoprotein, opsin, covalently linked to cis-retinal. Required for the maintenance of cone outer segment organization in the ventral retina, but not essential for the maintenance of functioning cone photoreceptors. Involved in ensuring correct abundance and localization of retinal membrane proteins. May increase spectral sensitivity in dim light. In Bos taurus (Bovine), this protein is Short-wave-sensitive opsin 1 (OPN1SW).